We begin with the raw amino-acid sequence, 548 residues long: Transcriptional adapter ADA2a (548 aa).

Residues M1 to E30 are disordered. The segment at P48–F104 adopts a ZZ-type zinc-finger fold. C53, C56, C68, C71, C77, C80, H90, and H94 together coordinate Zn(2+). The region spanning L106–P158 is the SANT domain. At K257 the chain carries N6-acetyllysine; by GCN5. Positions Q365 to R386 form a coiled coil. The region spanning P461–T548 is the SWIRM domain.

In terms of assembly, interacts in vitro with the HAT domain of GCN5 and with the DNA-binding domain of the transcriptional activator DREB1B/CBF1. In terms of processing, acetylated in vitro by GCN5, but acetylation is not essential for biological activity. As to expression, expressed in roots and leaves.

It localises to the nucleus. Its function is as follows. Required for the function of some acidic activation domains, which activate transcription from a distant site. The exact mechanism of action is not yet known. ADA2 stimulates the acetyltransferase activity of GCN5 on free histones or nucleosomes, probably by opening up the promoter region. The sequence is that of Transcriptional adapter ADA2a (ADA2A) from Arabidopsis thaliana (Mouse-ear cress).